We begin with the raw amino-acid sequence, 227 residues long: LysM and putative peptidoglycan-binding domain-containing protein 1 (227 aa).

Over residues 1-11 the composition is skewed to pro residues; that stretch reads MASPSRQPPPG. The segment at 1–20 is disordered; sequence MASPSRQPPPGGSGLLHGSR. A phosphoserine mark is found at Ser-23 and Ser-33. The region spanning 40–84 is the LysM domain; it reads LEHQLEPGDTLAGLALKYGVTMEQIKRANRLYTNDSIFLKKTLYI. The disordered stretch occupies residues 95-150; sequence NGLDSEEEKDGEEEVRPSNDEVWPHSTERKKQETGAGRANGEVFPTPGQETPTPIH. The segment covering 98–107 has biased composition (acidic residues); sequence DSEEEKDGEE. Ser-99 carries the post-translational modification Phosphoserine. A compositionally biased stretch (basic and acidic residues) spans 108–127; it reads EVRPSNDEVWPHSTERKKQE. 4 positions are modified to phosphoserine: Ser-166, Ser-181, Ser-194, and Ser-212. The disordered stretch occupies residues 172 to 196; the sequence is AAQKLKKGESGVPGEDAGLHLSSPR.

The polypeptide is LysM and putative peptidoglycan-binding domain-containing protein 1 (LYSMD1) (Macaca fascicularis (Crab-eating macaque)).